The following is a 375-amino-acid chain: Succinyl-diaminopimelate desuccinylase (375 aa).

His66 contributes to the Zn(2+) binding site. Residue Asp68 is part of the active site. Asp99 is a Zn(2+) binding site. Glu133 (proton acceptor) is an active-site residue. Zn(2+) is bound by residues Glu134, Glu162, and His348.

The protein belongs to the peptidase M20A family. DapE subfamily. In terms of assembly, homodimer. It depends on Zn(2+) as a cofactor. Co(2+) serves as cofactor.

It catalyses the reaction N-succinyl-(2S,6S)-2,6-diaminopimelate + H2O = (2S,6S)-2,6-diaminopimelate + succinate. The protein operates within amino-acid biosynthesis; L-lysine biosynthesis via DAP pathway; LL-2,6-diaminopimelate from (S)-tetrahydrodipicolinate (succinylase route): step 3/3. Catalyzes the hydrolysis of N-succinyl-L,L-diaminopimelic acid (SDAP), forming succinate and LL-2,6-diaminopimelate (DAP), an intermediate involved in the bacterial biosynthesis of lysine and meso-diaminopimelic acid, an essential component of bacterial cell walls. This Shigella dysenteriae serotype 1 (strain Sd197) protein is Succinyl-diaminopimelate desuccinylase.